Reading from the N-terminus, the 195-residue chain is Flavin prenyltransferase UbiX (195 aa).

Residues 17 to 19, S43, 94 to 97, and R129 each bind FMN; these read GGS and SAGT. Residues Y159 and R175 each contribute to the dimethylallyl phosphate site.

Belongs to the UbiX/PAD1 family.

The enzyme catalyses dimethylallyl phosphate + FMNH2 = prenylated FMNH2 + phosphate. In terms of biological role, flavin prenyltransferase that catalyzes the synthesis of the prenylated FMN cofactor (prenyl-FMN) for 4-hydroxy-3-polyprenylbenzoic acid decarboxylase UbiD. The prenyltransferase is metal-independent and links a dimethylallyl moiety from dimethylallyl monophosphate (DMAP) to the flavin N5 and C6 atoms of FMN. This chain is Flavin prenyltransferase UbiX, found in Deinococcus radiodurans (strain ATCC 13939 / DSM 20539 / JCM 16871 / CCUG 27074 / LMG 4051 / NBRC 15346 / NCIMB 9279 / VKM B-1422 / R1).